The chain runs to 1074 residues: Fibrous sheath CABYR-binding protein (1074 aa).

Residues 1–73 (MEECEEPEEP…SKDNYSRKEY (73 aa)) are disordered. Phosphoserine occurs at positions 25, 57, 186, and 275. Disordered regions lie at residues 272–294 (QAPS…KDVV) and 317–343 (LVQG…SELP). The span at 274–290 (PSPAEETSAAETATTTA) shows a compositional bias: low complexity. Serine 365 carries the phosphoserine modification. Disordered regions lie at residues 437–789 (VSAD…PLES) and 818–982 (GVPA…PLKT). Over residues 448-467 (PPSAEDASEEVASSEVLPPS) the composition is skewed to low complexity. Residues 528 to 544 (VLPPPAEEAPAEVPPPL) show a composition bias toward pro residues. Over residues 558-575 (EEGPAEVPLAPAEEVPAE) the composition is skewed to low complexity. Pro residues-rich tracts occupy residues 576-592 (FLPP…PPPL) and 673-688 (PLPP…PPPA). Residues 689 to 720 (TEEAPVEVLPPATEEAPVEVLPPATEEAPVEV) are compositionally biased toward low complexity. Residue serine 1020 is modified to Phosphoserine. The interval 1026–1054 (SEKELESTTLTSDKMSEGIDSVPEDVSGT) is disordered.

Interacts with CABYR. Interacts with ROPN1 and ROPN1L; the interaction increases upon spermatozoa capacitation conditions. Post-translationally, phosphorylated by PKA upon spermatozoa capacitation conditions. As to expression, expression is restricted to testis and epididymis, expressed by spermatozoa.

Its subcellular location is the cell projection. The protein resides in the cilium. It localises to the flagellum. Functionally, may be involved in the later stages of fibrous sheath biogenesis and spermatozoa capacitation. Inhibits ROPN1 and ROPN1L SUMOylation. Binds calcium. The protein is Fibrous sheath CABYR-binding protein of Mus musculus (Mouse).